The chain runs to 921 residues: GPI ethanolamine phosphate transferase 1 (921 aa).

Over 1 to 9 (MKNNTRFTL) the chain is Cytoplasmic. The chain crosses the membrane as a helical span at residues 10-30 (IVVGVLFHLLYLWSIFDIYFI). The Lumenal segment spans residues 31–457 (SPLVHGMEQK…TTYNWRFIRT (427 aa)). N-linked (GlcNAc...) asparagine glycans are attached at residues Asn-90, Asn-138, Asn-198, Asn-262, and Asn-286. Residues 458-478 (IVTFGFLGWICYSFMIFLKLF) traverse the membrane as a helical segment. Over 479-488 (ILNNSQTTHP) the chain is Cytoplasmic. Residues 489–509 (SILNISIFTSLGLILNYILFY) traverse the membrane as a helical segment. The Lumenal segment spans residues 510 to 516 (QKSPLNF). The chain crosses the membrane as a helical span at residues 517–537 (YLYLIFPLFFWSKIFSNTAII). The Cytoplasmic portion of the chain corresponds to 538 to 552 (RDGVNEFFKGISKAE). Residues 553-573 (SVIIGLTIISIYEGIVYGFFH) form a helical membrane-spanning segment. Over 574–575 (RW) the chain is Lumenal. The helical transmembrane segment at 576 to 596 (ILSLILVSFAFYPLVCGVTDL) threads the bilayer. At 597–599 (FTN) the chain is on the cytoplasmic side. A helical transmembrane segment spans residues 600-620 (LLWILTSVGLSSFTLLDAVKI). Position 621 (Glu-621) is a topological domain, lumenal. A helical transmembrane segment spans residues 622-642 (NLQQIQVAGILIVLSSAYAVM). Residues 643-654 (RLSQDISKYTQH) are Cytoplasmic-facing. A helical membrane pass occupies residues 655 to 675 (LLSIQIFLVSGMLHFTSKSVI). Over 676 to 684 (SLQKREGLP) the chain is Lumenal. Residues 685–705 (AFAQVGGWAILVISLTIMPFL) form a helical membrane-spanning segment. At 706–728 (HYLKPNNNYQVRLLTIYLTFAPS) the chain is on the cytoplasmic side. A helical membrane pass occupies residues 729–749 (FIILSISFEALFYFIFTAYIV). Over 750–777 (QWLQIEKNIKVLKDEQKSDSNGIQLLRV) the chain is Lumenal. A helical membrane pass occupies residues 778–798 (AIIGFFLQQIAFFGTGNVASI). The Cytoplasmic portion of the chain corresponds to 799–819 (SSFSLDSVYRLLPVFDPFPMG). A helical membrane pass occupies residues 820 to 840 (ALLMLKLIIPYVLLSCGLGIM). The Lumenal portion of the chain corresponds to 841-849 (NIQLDIKDY). A helical membrane pass occupies residues 850 to 870 (TISSLIISTSDILSLNFFYLL). Topologically, residues 871-878 (KTEGSWLD) are cytoplasmic. Residues 879–899 (IGVTISNYCLAILSSLFMLIL) traverse the membrane as a helical segment. The Lumenal portion of the chain corresponds to 900-921 (EIVGHQLLKNVTRATSSQKKTN). A glycan (N-linked (GlcNAc...) asparagine) is linked at Asn-909.

Belongs to the PIGG/PIGN/PIGO family. PIGN subfamily.

It is found in the endoplasmic reticulum membrane. Its pathway is glycolipid biosynthesis; glycosylphosphatidylinositol-anchor biosynthesis. In terms of biological role, ethanolamine phosphate transferase involved in glycosylphosphatidylinositol-anchor biosynthesis. Transfers ethanolamine phosphate to the first alpha-1,4-linked mannose of the glycosylphosphatidylinositol precursor of GPI-anchor. This chain is GPI ethanolamine phosphate transferase 1 (MCD4), found in Candida glabrata (strain ATCC 2001 / BCRC 20586 / JCM 3761 / NBRC 0622 / NRRL Y-65 / CBS 138) (Yeast).